Here is a 474-residue protein sequence, read N- to C-terminus: Crocetin glucosyltransferase, chloroplastic (474 aa).

The N-terminal 45 residues, 1 to 45 (MVQQRHVLLITYPAQGHINPALQFAQRLLRMGIQVTLATSVYALS), are a transit peptide targeting the chloroplast. Catalysis depends on histidine 17, which acts as the Proton acceptor. Histidine 17 lines the an anthocyanidin pocket. Residues glutamine 346, histidine 361, tryptophan 364, asparagine 365, serine 366, glutamate 369, aspartate 385, and glutamine 386 each contribute to the UDP-alpha-D-glucose site.

Belongs to the UDP-glycosyltransferase family. As to expression, ubiquitous.

Its subcellular location is the plastid. It is found in the chloroplast. The enzyme catalyses crocetin + UDP-alpha-D-glucose = beta-D-glucosyl crocetin + UDP. The catalysed reaction is beta-D-glucosyl crocetin + UDP-alpha-D-glucose = bis(beta-D-glucosyl) crocetin + UDP. It carries out the reaction beta-D-gentiobiosyl crocetin + UDP-alpha-D-glucose = beta-D-gentiobiosyl beta-D-glucosyl crocetin + UDP. Glucosyltransferase acting on a broad range of substrates, including crocetin, 4-coumaric acid, caffeic acid and ferulic acid. No activity with indol-3-acetic acid, bixin and norbixin, and no formation of O-glucosides. Involved with UGT94E5 in sequential glycosylation of crocetin to crocin (bis(beta-D-gentiobiosyl) crocetin). The chain is Crocetin glucosyltransferase, chloroplastic (UGT75L6) from Gardenia jasminoides (Cape jasmine).